A 183-amino-acid polypeptide reads, in one-letter code: UPF0398 protein BLi02355/BL05236 (183 aa).

It belongs to the UPF0398 family.

The protein is UPF0398 protein BLi02355/BL05236 of Bacillus licheniformis (strain ATCC 14580 / DSM 13 / JCM 2505 / CCUG 7422 / NBRC 12200 / NCIMB 9375 / NCTC 10341 / NRRL NRS-1264 / Gibson 46).